The chain runs to 149 residues: UPF0260 protein RCAP_rcc02083 (149 aa).

This sequence belongs to the UPF0260 family.

The chain is UPF0260 protein RCAP_rcc02083 from Rhodobacter capsulatus (strain ATCC BAA-309 / NBRC 16581 / SB1003).